The following is a 369-amino-acid chain: Probable dual-specificity RNA methyltransferase RlmN (369 aa).

The Proton acceptor role is filled by Glu98. One can recognise a Radical SAM core domain in the interval 106–341 (STSRNTLCIS…VTVRKSRGAD (236 aa)). The cysteines at positions 113 and 346 are disulfide-linked. 3 residues coordinate [4Fe-4S] cluster: Cys120, Cys124, and Cys127. S-adenosyl-L-methionine contacts are provided by residues 171 to 172 (GE), Ser204, 227 to 229 (SLH), and Asn303. Cys346 acts as the S-methylcysteine intermediate in catalysis.

This sequence belongs to the radical SAM superfamily. RlmN family. It depends on [4Fe-4S] cluster as a cofactor.

Its subcellular location is the cytoplasm. It catalyses the reaction adenosine(2503) in 23S rRNA + 2 reduced [2Fe-2S]-[ferredoxin] + 2 S-adenosyl-L-methionine = 2-methyladenosine(2503) in 23S rRNA + 5'-deoxyadenosine + L-methionine + 2 oxidized [2Fe-2S]-[ferredoxin] + S-adenosyl-L-homocysteine. The catalysed reaction is adenosine(37) in tRNA + 2 reduced [2Fe-2S]-[ferredoxin] + 2 S-adenosyl-L-methionine = 2-methyladenosine(37) in tRNA + 5'-deoxyadenosine + L-methionine + 2 oxidized [2Fe-2S]-[ferredoxin] + S-adenosyl-L-homocysteine. Its function is as follows. Specifically methylates position 2 of adenine 2503 in 23S rRNA and position 2 of adenine 37 in tRNAs. In Chloroherpeton thalassium (strain ATCC 35110 / GB-78), this protein is Probable dual-specificity RNA methyltransferase RlmN.